Here is a 534-residue protein sequence, read N- to C-terminus: Invertase (534 aa).

A signal peptide spans 1–21 (MKITTLVASILMSVLLEPVIA). Residues 46 to 49 (WLND) and Gln-67 contribute to the substrate site. Asp-49 is a catalytic residue. An N-linked (GlcNAc...) asparagine glycan is attached at Asn-71. Substrate is bound at residue 109–110 (FS). N-linked (GlcNAc...) asparagine glycans are attached at residues Asn-118, Asn-119, and Asn-172. 177 to 178 (RD) lines the substrate pocket. Asn-218 carries N-linked (GlcNAc...) asparagine glycosylation. Substrate contacts are provided by Glu-229 and Trp-313. 4 N-linked (GlcNAc...) asparagine glycosylation sites follow: Asn-375, Asn-381, Asn-392, and Asn-420.

Belongs to the glycosyl hydrolase 32 family.

The catalysed reaction is Hydrolysis of terminal non-reducing beta-D-fructofuranoside residues in beta-D-fructofuranosides.. In Debaryomyces hansenii (strain ATCC 36239 / CBS 767 / BCRC 21394 / JCM 1990 / NBRC 0083 / IGC 2968) (Yeast), this protein is Invertase (INV).